Here is a 492-residue protein sequence, read N- to C-terminus: Prenylcysteine oxidase 1-like (492 aa).

A signal peptide spans 1–21 (MAHAARLLAALAALLAAAATG). N340 carries an N-linked (GlcNAc...) asparagine glycan.

The protein belongs to the prenylcysteine oxidase family. It depends on FAD as a cofactor.

The protein resides in the secreted. Its function is as follows. Likely to have oxidoreductase activity. Required in the mevalonate pathway to regulate prenylation and enhances the bactericidal activity of neutrophils. This Bos taurus (Bovine) protein is Prenylcysteine oxidase 1-like (PCYOX1L).